Here is a 451-residue protein sequence, read N- to C-terminus: Phosphoglucosamine mutase (451 aa).

Residue serine 101 is the Phosphoserine intermediate of the active site. Residues serine 101, aspartate 240, aspartate 242, and aspartate 244 each coordinate Mg(2+). Phosphoserine is present on serine 101.

Belongs to the phosphohexose mutase family. It depends on Mg(2+) as a cofactor. In terms of processing, activated by phosphorylation.

It carries out the reaction alpha-D-glucosamine 1-phosphate = D-glucosamine 6-phosphate. Catalyzes the conversion of glucosamine-6-phosphate to glucosamine-1-phosphate. This Thioalkalivibrio sulfidiphilus (strain HL-EbGR7) protein is Phosphoglucosamine mutase.